Consider the following 260-residue polypeptide: Trans-aconitate 2-methyltransferase (260 aa).

Belongs to the methyltransferase superfamily. Tam family.

Its subcellular location is the cytoplasm. It carries out the reaction trans-aconitate + S-adenosyl-L-methionine = (E)-3-(methoxycarbonyl)pent-2-enedioate + S-adenosyl-L-homocysteine. Catalyzes the S-adenosylmethionine monomethyl esterification of trans-aconitate. The sequence is that of Trans-aconitate 2-methyltransferase from Methylobacterium radiotolerans (strain ATCC 27329 / DSM 1819 / JCM 2831 / NBRC 15690 / NCIMB 10815 / 0-1).